The primary structure comprises 480 residues: Speriolin (480 aa).

Positions 1 to 76 (MSLLTSYEGL…HQGVFLPPAS (76 aa)) are necessary for targeting to centrosomes. A coiled-coil region spans residues 2–45 (SLLTSYEGLRHQIERLVRENEELKKLVRLIRENQELKSAIKTQA). Disordered stretches follow at residues 252 to 297 (INNI…SRVM) and 305 to 324 (VEME…DNPR).

It belongs to the speriolin family. Found in a complex with CDC20, CDC27 and TUBG1. Interacts with CDC20. In terms of tissue distribution, expressed in testis. Expressed in pachyten spermatocytes, spermatids and epididymal sperm (at protein level).

It localises to the cytoplasm. Its subcellular location is the cytoskeleton. It is found in the microtubule organizing center. The protein resides in the centrosome. The polypeptide is Speriolin (Spatc1) (Mus musculus (Mouse)).